Here is a 383-residue protein sequence, read N- to C-terminus: tRNA-specific 2-thiouridylase MnmA (383 aa).

ATP contacts are provided by residues Gly11 to Ser18 and Met37. An interaction with target base in tRNA region spans residues Asn97–Asp99. The active-site Nucleophile is the Cys102. A disulfide bond links Cys102 and Cys200. Gly127 serves as a coordination point for ATP. Positions Lys150–Gln152 are interaction with tRNA. Cys200 (cysteine persulfide intermediate) is an active-site residue. Positions Arg312–Tyr313 are interaction with tRNA. Residues Ile361–Val383 form a disordered region.

It belongs to the MnmA/TRMU family.

It is found in the cytoplasm. The enzyme catalyses S-sulfanyl-L-cysteinyl-[protein] + uridine(34) in tRNA + AH2 + ATP = 2-thiouridine(34) in tRNA + L-cysteinyl-[protein] + A + AMP + diphosphate + H(+). Its function is as follows. Catalyzes the 2-thiolation of uridine at the wobble position (U34) of tRNA, leading to the formation of s(2)U34. This Halorhodospira halophila (strain DSM 244 / SL1) (Ectothiorhodospira halophila (strain DSM 244 / SL1)) protein is tRNA-specific 2-thiouridylase MnmA.